The primary structure comprises 329 residues: Peroxidase 17 (329 aa).

Positions 1–19 are cleaved as a signal peptide; that stretch reads MSLLPHLILYLTLLTVVVT. Cystine bridges form between Cys32–Cys112, Cys65–Cys70, Cys118–Cys315, and Cys197–Cys229. His63 functions as the Proton acceptor in the catalytic mechanism. Positions 64, 67, 69, 71, and 73 each coordinate Ca(2+). Residue Pro160 participates in substrate binding. 2 N-linked (GlcNAc...) asparagine glycosylation sites follow: Asn165 and Asn177. His190 is a heme b binding site. Ser191 is a Ca(2+) binding site. Residues Asn206 and Asn236 are each glycosylated (N-linked (GlcNAc...) asparagine). Residues Asp242, Thr244, and Asp249 each coordinate Ca(2+).

This sequence belongs to the peroxidase family. Classical plant (class III) peroxidase subfamily. Heme b is required as a cofactor. It depends on Ca(2+) as a cofactor.

It localises to the secreted. It is found in the vacuole. The enzyme catalyses 2 a phenolic donor + H2O2 = 2 a phenolic radical donor + 2 H2O. Its function is as follows. Removal of H(2)O(2), oxidation of toxic reductants, biosynthesis and degradation of lignin, suberization, auxin catabolism, response to environmental stresses such as wounding, pathogen attack and oxidative stress. These functions might be dependent on each isozyme/isoform in each plant tissue. This chain is Peroxidase 17 (PER17), found in Arabidopsis thaliana (Mouse-ear cress).